The following is a 936-amino-acid chain: General transcription factor II-I repeat domain-containing protein 2 (936 aa).

A GTF2I-like 1 repeat occupies glutamate 95–glycine 189. Residues proline 199–threonine 222 are disordered. A GTF2I-like 2 repeat occupies leucine 319–glycine 413.

This sequence belongs to the TFII-I family. As to expression, ubiquitous.

It is found in the nucleus. The chain is General transcription factor II-I repeat domain-containing protein 2 (Gtf2ird2) from Mus musculus (Mouse).